Here is a 372-residue protein sequence, read N- to C-terminus: Nickel transporter NicT (372 aa).

8 consecutive transmembrane segments (helical) span residues 30–50 (LMFA…TLLV), 55–75 (LSLG…TLGL), 104–124 (VGFF…VMLV), 152–172 (ISGA…VGIV), 218–238 (VGFL…LVLA), 245–265 (GLPW…MCLL), 294–314 (VTGL…LGLI), and 335–355 (TVGF…LLVW).

It belongs to the NiCoT transporter (TC 2.A.52) family.

The protein resides in the cell membrane. It carries out the reaction Ni(2+)(in) = Ni(2+)(out). With respect to regulation, export of the fluoroquinolone antibiotic norfloxacin is inhibited by the proton ionophore carbonyl cyanide m-chlorophenylhydrazone (CCCP). Nickel may influence the extrusion of antibiotics possibly by facilitating the proton motive force-dependent efflux process. In terms of biological role, involved in nickel uptake. In addition, acts as a drug efflux pump and contributes to moderate tolerance towards different classes of antibiotics, including fluoroquinolones, aminoglycosides and the anti-TB drug isoniazid, with a preference for fluoroquinolones. The drug efflux function is probably dependent on proton motive force (pmf) or ion gradient, and might be facilitated by the presence of Ni(2+) ions. In Mycobacterium tuberculosis (strain ATCC 25618 / H37Rv), this protein is Nickel transporter NicT.